Reading from the N-terminus, the 939-residue chain is Valine--tRNA ligase (939 aa).

The 'HIGH' region motif lies at 45–55; sequence PNVTGTLHMGH. Residues 549–553 carry the 'KMSKS' region motif; it reads KMSKS. ATP is bound at residue Lys552. A coiled-coil region spans residues 876–939; sequence AAETARLRKE…KIRVQLVKLA (64 aa).

It belongs to the class-I aminoacyl-tRNA synthetase family. ValS type 1 subfamily. Monomer.

It localises to the cytoplasm. The enzyme catalyses tRNA(Val) + L-valine + ATP = L-valyl-tRNA(Val) + AMP + diphosphate. Its function is as follows. Catalyzes the attachment of valine to tRNA(Val). As ValRS can inadvertently accommodate and process structurally similar amino acids such as threonine, to avoid such errors, it has a 'posttransfer' editing activity that hydrolyzes mischarged Thr-tRNA(Val) in a tRNA-dependent manner. The protein is Valine--tRNA ligase of Chromobacterium violaceum (strain ATCC 12472 / DSM 30191 / JCM 1249 / CCUG 213 / NBRC 12614 / NCIMB 9131 / NCTC 9757 / MK).